Consider the following 303-residue polypeptide: Uricase (303 aa).

Position 2 is an N-acetylalanine (A2). N6-acetyllysine; alternate is present on residues K10 and K23. K10 and K23 each carry N6-succinyllysine; alternate. K23 functions as the Charge relay system in the catalytic mechanism. 2 positions are modified to N6-acetyllysine: K27 and K36. Phosphoserine is present on residues S39 and S63. The active-site Charge relay system is T68. The urate site is built by T68 and D69. K118, K122, and K164 each carry N6-acetyllysine. F170 is a binding site for urate. An N6-acetyllysine mark is found at K175 and K185. R187 serves as a coordination point for urate. An N6-acetyllysine; alternate mark is found at K220 and K227. N6-succinyllysine; alternate is present on residues K220 and K227. The residue at position 231 (S231) is a Phosphoserine. Residues V234, Q235, and N261 each contribute to the urate site. Residue H263 is the Charge relay system of the active site. K277 carries the N6-acetyllysine modification. Phosphotyrosine is present on Y288. Positions S301–L303 match the Microbody targeting signal motif.

Belongs to the uricase family. Acetylation of Lys-118, Lys-164 and Lys-290 is observed in liver mitochondria from fasted mice but not from fed mice. May be deacetylated by Sirt5; however it is unclear whether Sirt5 mediates deacetylation or desuccinylation of Uox; additional evidence is required to validate these results.

It localises to the peroxisome. It is found in the mitochondrion. The catalysed reaction is urate + O2 + H2O = 5-hydroxyisourate + H2O2. The protein operates within purine metabolism; urate degradation; (S)-allantoin from urate: step 1/3. Functionally, catalyzes the oxidation of uric acid to 5-hydroxyisourate, which is further processed to form (S)-allantoin. The sequence is that of Uricase (Uox) from Mus musculus (Mouse).